The sequence spans 184 residues: Tumor necrosis factor alpha-induced protein 8-like protein 2 (184 aa).

Phosphoserine is present on Ser-3.

This sequence belongs to the TNFAIP8 family. TNFAIP8L2 subfamily. In terms of assembly, may interact with CASP8; however, such result is unclear since could not reproduce the interaction with CASP8. Interacts with RAC1. In terms of processing, phosphorylated by TAK1/MAP3K7; this phosphorylation triggers association with BTRC and subsequent ubiquitination and degradation. Post-translationally, ubiquitinated in a BTRC-depdent manner; leading to degradation mediated through the proteasome pathway.

Its subcellular location is the cytoplasm. It is found in the nucleus. The protein localises to the lysosome. Functionally, acts as a negative regulator of innate and adaptive immunity by maintaining immune homeostasis. Plays a regulatory role in the Toll-like signaling pathway by determining the strength of LPS-induced signaling and gene expression. Inhibits TCR-mediated T-cell activation and negatively regulate T-cell function to prevent hyperresponsiveness. Also inhibits autolysosome formation via negatively modulating MTOR activation by interacting with RAC1 and promoting the disassociation of the RAC1-MTOR complex. Plays an essential role in NK-cell biology by acting as a checkpoint and displaying an expression pattern correlating with NK-cell maturation process and by negatively regulating NK-cell maturation and antitumor immunity. Mechanistically, suppresses IL-15-triggered mTOR activity in NK-cells. This chain is Tumor necrosis factor alpha-induced protein 8-like protein 2 (TNFAIP8L2), found in Oryctolagus cuniculus (Rabbit).